The chain runs to 327 residues: Gibberellin 2-beta-dioxygenase 3 (327 aa).

One can recognise a Fe2OG dioxygenase domain in the interval 173 to 278; it reads GSDQVFRVNH…RVSFIYFGGP (106 aa). Y183 is a 2-oxoglutarate binding site. Residues H202, D204, and H259 each coordinate Fe cation. The 2-oxoglutarate site is built by R269 and S271.

The protein belongs to the iron/ascorbate-dependent oxidoreductase family. GA2OX subfamily. Requires L-ascorbate as cofactor. Fe(2+) serves as cofactor. Expressed in roots, shoot apex, leaf blades, leaf sheaths, stems and flowers.

The catalysed reaction is gibberellin A1 + 2-oxoglutarate + O2 = gibberellin A8 + succinate + CO2. Catalyzes the 2-beta-hydroxylation of several biologically active gibberellins, leading to the homeostatic regulation of their endogenous level. Catabolism of gibberellins (GAs) plays a central role in plant development. In vitro, converts GA1, GA20, and GA29 to the corresponding 2-beta-hydroxylated products GA8, GA29-catabolite, respectively. This chain is Gibberellin 2-beta-dioxygenase 3, found in Oryza sativa subsp. japonica (Rice).